A 228-amino-acid polypeptide reads, in one-letter code: Geranylgeranylglyceryl phosphate synthase (228 aa).

Residue lysine 11 participates in sn-glycerol 1-phosphate binding. Residues aspartate 13 and threonine 39 each coordinate Mg(2+). Residues 159–164 (YIEYSG), glycine 189, and 209–210 (GN) each bind sn-glycerol 1-phosphate.

Belongs to the GGGP/HepGP synthase family. Group I subfamily. It depends on Mg(2+) as a cofactor.

The protein resides in the cytoplasm. It carries out the reaction sn-glycerol 1-phosphate + (2E,6E,10E)-geranylgeranyl diphosphate = sn-3-O-(geranylgeranyl)glycerol 1-phosphate + diphosphate. It functions in the pathway membrane lipid metabolism; glycerophospholipid metabolism. In terms of biological role, prenyltransferase that catalyzes the transfer of the geranylgeranyl moiety of geranylgeranyl diphosphate (GGPP) to the C3 hydroxyl of sn-glycerol-1-phosphate (G1P). This reaction is the first ether-bond-formation step in the biosynthesis of archaeal membrane lipids. The polypeptide is Geranylgeranylglyceryl phosphate synthase (Methanoregula boonei (strain DSM 21154 / JCM 14090 / 6A8)).